Here is a 162-residue protein sequence, read N- to C-terminus: MSEIHLDDLDRNILRLLKKDARLTISELSEQLKKPESTIHFRIKKLQERGVIERYTIILGEQLKPKHLALIVLEVGKPVIEDFLERYISYISSTLSALPGVLFVAKSGEDKIIALVGKNNKDELVKFIEENITSIPNLKHIQIFPITEIKKGEDLTGFLAEV.

Residues Leu-6–Pro-78 enclose the HTH asnC-type domain. Positions Ile-25–Lys-44 form a DNA-binding region, H-T-H motif.

This is an uncharacterized protein from Pyrococcus furiosus (strain ATCC 43587 / DSM 3638 / JCM 8422 / Vc1).